A 480-amino-acid chain; its full sequence is Probable serine/threonine-protein phosphatase 2A regulatory subunit B'' subunit TON2 (480 aa).

EF-hand domains follow at residues 186–221, 294–329, and 369–404; these read VSLT…LIPN, TSAQ…TLTE, and DTPE…VHQK. Residues D307, D309, S311, S313, and E318 each coordinate Ca(2+).

As to quaternary structure, interacts with PP2AA1. As to expression, widely expressed.

The protein resides in the cytoplasm. It localises to the cytoskeleton. In terms of biological role, probable regulatory subunit of type 2A protein phosphatase involved in the control of the dynamic organization of the cortical cytoskeleton. Plays an important role in the organization of interphase microtubule arrays in part through the regulation of nucleation geometry. Required for the reorganization of cortical arrays in response to light. The protein is Probable serine/threonine-protein phosphatase 2A regulatory subunit B'' subunit TON2 (TON2) of Arabidopsis thaliana (Mouse-ear cress).